Here is a 133-residue protein sequence, read N- to C-terminus: Glycophorin-A (133 aa).

2 O-linked (GalNAc...) threonine glycosylation sites follow: Thr-1 and Thr-6. Residues 1–34 (TETPVTGEQGSATPGNVSNATVTAGKPSATSPGV) are disordered. Topologically, residues 1–62 (TETPVTGEQG…SYHQDFSHAE (62 aa)) are extracellular. A glycan (O-linked (GalNAc...) serine) is linked at Ser-11. Thr-13 carries O-linked (GalNAc...) threonine glycosylation. Asn-19 is a glycosylation site (N-linked (GlcNAc...) asparagine). Thr-21, Thr-23, and Thr-30 each carry an O-linked (GalNAc...) threonine glycan. An O-linked (GalNAc...) serine glycan is attached at Ser-31. N-linked (GlcNAc...) asparagine glycosylation is present at Asn-39. O-linked (GalNAc...) threonine glycosylation is found at Thr-41 and Thr-48. A helical transmembrane segment spans residues 63-85 (ITGIIFAVMAGLLLIIFLIAYLI). Over 86 to 133 (RRMIKKPLPVPKPQDSPDIGTENTADPSELQDTEDPPLTSVEIETPAS) the chain is Cytoplasmic. The segment at 93–133 (LPVPKPQDSPDIGTENTADPSELQDTEDPPLTSVEIETPAS) is disordered.

The protein belongs to the glycophorin-A family. As to quaternary structure, homodimer. Component of the ankyrin-1 complex in the erythrocyte, composed of ANK1, RHCE, RHAG, SLC4A1, EPB42, GYPA, GYPB and AQP1. Interacts with SLC4A1; a GYPA monomer is bound at each end of the SLC4A1 dimer forming a heterotetramer.

The protein localises to the membrane. In terms of biological role, component of the ankyrin-1 complex, a multiprotein complex involved in the stability and shape of the erythrocyte membrane. Glycophorin A is the major intrinsic membrane protein of the erythrocyte. The N-terminal glycosylated segment, which lies outside the erythrocyte membrane, has MN blood group receptors. Appears to be important for the function of SLC4A1 and is required for high activity of SLC4A1. May be involved in translocation of SLC4A1 to the plasma membrane. In Sus scrofa (Pig), this protein is Glycophorin-A.